Reading from the N-terminus, the 291-residue chain is Quinol oxidase subunit 2 (291 aa).

Positions 1–28 are cleaved as a signal peptide; that stretch reads MQLKKAFWKLASLLPXSLLLFLGGCDKK. The next 2 membrane-spanning stretches (helical) occupy residues 49–69 and 91–111; these read SFLL…VILI and LEII…IPTV.

Belongs to the cytochrome c oxidase subunit 2 family.

The protein localises to the cell membrane. It catalyses the reaction 2 a quinol + O2 = 2 a quinone + 2 H2O. In terms of biological role, catalyzes quinol oxidation with the concomitant reduction of oxygen to water. Subunit II transfers the electrons from a quinol to the binuclear center of the catalytic subunit I. This chain is Quinol oxidase subunit 2, found in Bacillus cereus (strain ATCC 10987 / NRS 248).